Here is a 579-residue protein sequence, read N- to C-terminus: Glutamine--tRNA ligase (579 aa).

The 'HIGH' region signature appears at 41–51 (PEPNGYLHIGH). ATP-binding positions include 42–44 (EPN) and 48–54 (HIGHAKA). Positions 74 and 218 each coordinate L-glutamine. ATP is bound by residues Thr237, 285 to 286 (RL), and 293 to 295 (MSK). The 'KMSKS' region signature appears at 292 to 296 (VMSKR).

The protein belongs to the class-I aminoacyl-tRNA synthetase family. As to quaternary structure, monomer.

The protein resides in the cytoplasm. It catalyses the reaction tRNA(Gln) + L-glutamine + ATP = L-glutaminyl-tRNA(Gln) + AMP + diphosphate. This Xanthomonas axonopodis pv. citri (strain 306) protein is Glutamine--tRNA ligase.